A 329-amino-acid chain; its full sequence is Serpentine receptor class alpha-7 (329 aa).

The next 7 membrane-spanning stretches (helical) occupy residues Y25–V45, I57–A77, Y104–L124, V143–I163, R187–L207, T237–F257, and F273–V293.

It belongs to the nematode receptor-like protein sra family.

The protein resides in the membrane. This Caenorhabditis elegans protein is Serpentine receptor class alpha-7 (sra-7).